A 345-amino-acid polypeptide reads, in one-letter code: uncharacterized protein (345 aa).

It is found in the cell membrane. Involved in potassium and divalent cation transport. Enhances the transport activity of the cation/potassium transporter CzcD. This is an uncharacterized protein from Bacillus velezensis (strain DSM 23117 / BGSC 10A6 / LMG 26770 / FZB42) (Bacillus amyloliquefaciens subsp. plantarum).